The chain runs to 360 residues: Alpha-N-acetyl-neuraminyl-2,3-beta-galactosyl-1,3-N-acetyl-galactosaminide alpha-2,6-sialyltransferase (360 aa).

Residues methionine 1–cysteine 71 are Cytoplasmic-facing. A helical; Signal-anchor for type II membrane protein transmembrane segment spans residues isoleucine 72–threonine 94. Over cysteine 95–lysine 360 the chain is Lumenal. A disulfide bridge links cysteine 134 with cysteine 283. An N-linked (GlcNAc...) asparagine glycan is attached at asparagine 193.

The protein belongs to the glycosyltransferase 29 family. As to expression, high expression in brain and colon and to a lesser extent in lung, heart, kidney, spleen and thymus.

Its subcellular location is the golgi apparatus membrane. The catalysed reaction is an alpha-Neu5Ac-(2-&gt;3)-beta-D-Gal-(1-&gt;3)-D-GlcNAc derivative + CMP-N-acetyl-beta-neuraminate = an alpha-Neu5Ac-(2-&gt;3)-beta-D-Gal-(1-&gt;3)-[alpha-Neu5Ac-(2-&gt;6)]-D-GlcNAc derivative + CMP + H(+). The enzyme catalyses N-acetyl-alpha-neuraminosyl-(2-&gt;3)-beta-D-galactosyl-(1-&gt;3)-N-acetyl-D-galactosamine + CMP-N-acetyl-beta-neuraminate = N-acetyl-alpha-neuraminosyl-(2-&gt;3)-beta-D-galactosyl-(1-&gt;3)-[N-acetyl-alpha-neuraminosyl-(2-&gt;6)]-N-acetyl-D-galactosamine + CMP + H(+). It carries out the reaction a ganglioside GM1b (d18:1(4E)) + CMP-N-acetyl-beta-neuraminate = a ganglioside GD1alpha (d18:1(4E)) + CMP + H(+). It catalyses the reaction 3-O-[alpha-Neu5Ac-(2-&gt;3)-beta-D-Gal-(1-&gt;3)-alpha-D-GalNAc]-L-Ser-[protein] + CMP-N-acetyl-beta-neuraminate = a 3-O-{alpha-Neu5Ac-(2-&gt;3)-beta-D-Gal-(1-&gt;3)-[alpha-Neu5Ac-(2-&gt;6)]-alpha-D-GalNAc}-L-seryl-[protein] + CMP + H(+). The catalysed reaction is 3-O-[alpha-Neu5Ac-(2-&gt;3)-beta-D-Gal-(1-&gt;3)-alpha-D-GalNAc]-L-Thr-[protein] + CMP-N-acetyl-beta-neuraminate = a 3-O-{alpha-Neu5Ac-(2-&gt;3)-beta-D-Gal-(1-&gt;3)-[alpha-Neu5Ac-(2-&gt;6)]-alpha-D-GalNAc}-L-threonyl-[protein] + CMP + H(+). Its pathway is protein modification; protein glycosylation. It functions in the pathway glycolipid biosynthesis. Transfers the sialyl group (N-acetyl-alpha-neuraminyl or NeuAc) from CMP-NeuAc to the GalNAc residue on the NeuAc-alpha-2,3-Gal-beta-1,3-GalNAc sequence of glycoproteins and glycolipids forming an alpha-2,6-linkage. Produces branched type disialyl structures by transfer of a sialyl group onto a GalNAc residue inside the backbone core chains. Prefers O-glycans to glycoproteins or glycolipids. The protein is Alpha-N-acetyl-neuraminyl-2,3-beta-galactosyl-1,3-N-acetyl-galactosaminide alpha-2,6-sialyltransferase (St6galnac4) of Mus musculus (Mouse).